Here is a 114-residue protein sequence, read N- to C-terminus: Gonadotropin subunit beta-1 (114 aa).

An N-terminal signal peptide occupies residues 1 to 19; the sequence is MQLVLMAAVLALAEVGCFG. Disulfide bonds link Cys-20–Cys-66, Cys-32–Cys-80, Cys-37–Cys-114, Cys-43–Cys-92, Cys-47–Cys-94, and Cys-97–Cys-104. Asn-24 is a glycosylation site (N-linked (GlcNAc...) asparagine).

This sequence belongs to the glycoprotein hormones subunit beta family. In terms of assembly, heterodimer of an alpha and a beta chain.

The protein localises to the secreted. Its function is as follows. Involved in gametogenesis and steroidogenesis. The polypeptide is Gonadotropin subunit beta-1 (cgba) (Fundulus heteroclitus (Killifish)).